Here is a 517-residue protein sequence, read N- to C-terminus: 2-isopropylmalate synthase (517 aa).

One can recognise a Pyruvate carboxyltransferase domain in the interval 4–266 (INFFDTTLRD…ESTIQLNEIK (263 aa)). Aspartate 13, histidine 201, histidine 203, and asparagine 237 together coordinate Mn(2+). Residues 391-517 (EFESLQVHYG…IEIEKHHAIS (127 aa)) are regulatory domain.

It belongs to the alpha-IPM synthase/homocitrate synthase family. LeuA type 1 subfamily. In terms of assembly, homodimer. It depends on Mn(2+) as a cofactor.

The protein resides in the cytoplasm. It carries out the reaction 3-methyl-2-oxobutanoate + acetyl-CoA + H2O = (2S)-2-isopropylmalate + CoA + H(+). The protein operates within amino-acid biosynthesis; L-leucine biosynthesis; L-leucine from 3-methyl-2-oxobutanoate: step 1/4. In terms of biological role, catalyzes the condensation of the acetyl group of acetyl-CoA with 3-methyl-2-oxobutanoate (2-ketoisovalerate) to form 3-carboxy-3-hydroxy-4-methylpentanoate (2-isopropylmalate). The protein is 2-isopropylmalate synthase of Bacillus pumilus (strain SAFR-032).